The chain runs to 154 residues: Small ribosomal subunit protein eS10 (154 aa).

A disordered region spans residues 91 to 154 (ATMKKQASRP…ERSAPAPQQN (64 aa)). Basic and acidic residues predominate over residues 124–135 (RGDRRQGGDRRG).

The protein belongs to the eukaryotic ribosomal protein eS10 family.

The protein localises to the cytoplasm. This is Small ribosomal subunit protein eS10 (rps10) from Dictyostelium discoideum (Social amoeba).